We begin with the raw amino-acid sequence, 330 residues long: Peroxidase N1 (330 aa).

Positions 1–29 are cleaved as a signal peptide; it reads MEYYHHSINKMAMFMVILVLAIDVTMVLG. Position 30 is a pyrrolidone carboxylic acid (Q30). Intrachain disulfides connect C41/C117, C74/C79, C123/C326, and C201/C233. Catalysis depends on H72, which acts as the Proton acceptor. Ca(2+) is bound by residues D73, V76, G78, D80, and S82. P164 lines the substrate pocket. Position 194 (H194) interacts with heme b. T195 provides a ligand contact to Ca(2+). A glycan (N-linked (GlcNAc...) asparagine) is linked at N212. The Ca(2+) site is built by D246 and D254.

The protein belongs to the peroxidase family. Classical plant (class III) peroxidase subfamily. Ca(2+) serves as cofactor. The cofactor is heme b. Expressed at a high level in roots and at a trace level in lower leaves. Not expressed in upper leaves, stems, flowers, seeds and shoot apices.

It localises to the secreted. It carries out the reaction 2 a phenolic donor + H2O2 = 2 a phenolic radical donor + 2 H2O. In terms of biological role, removal of H(2)O(2), oxidation of toxic reductants, biosynthesis and degradation of lignin, suberization, auxin catabolism, response to environmental stresses such as wounding, pathogen attack and oxidative stress. These functions might be dependent on each isozyme/isoform in each plant tissue. Can use NADH, NADPH and monolignols as substrates. The chain is Peroxidase N1 from Nicotiana tabacum (Common tobacco).